The primary structure comprises 165 residues: NADH-quinone oxidoreductase subunit I (165 aa).

2 4Fe-4S ferredoxin-type domains span residues R57–D86 and S96–I125. Residues C66, C69, C72, C76, C105, C108, C111, and C115 each coordinate [4Fe-4S] cluster.

This sequence belongs to the complex I 23 kDa subunit family. As to quaternary structure, NDH-1 is composed of 14 different subunits. Subunits NuoA, H, J, K, L, M, N constitute the membrane sector of the complex. [4Fe-4S] cluster is required as a cofactor.

It is found in the cell inner membrane. It carries out the reaction a quinone + NADH + 5 H(+)(in) = a quinol + NAD(+) + 4 H(+)(out). Functionally, NDH-1 shuttles electrons from NADH, via FMN and iron-sulfur (Fe-S) centers, to quinones in the respiratory chain. The immediate electron acceptor for the enzyme in this species is believed to be ubiquinone. Couples the redox reaction to proton translocation (for every two electrons transferred, four hydrogen ions are translocated across the cytoplasmic membrane), and thus conserves the redox energy in a proton gradient. This Polaromonas naphthalenivorans (strain CJ2) protein is NADH-quinone oxidoreductase subunit I.